The chain runs to 136 residues: Nucleoside diphosphate kinase (136 aa).

Positions 10, 58, 86, 92, 104, and 114 each coordinate ATP. His-117 (pros-phosphohistidine intermediate) is an active-site residue.

Belongs to the NDK family. Homotetramer. Mg(2+) is required as a cofactor.

Its subcellular location is the cytoplasm. The enzyme catalyses a 2'-deoxyribonucleoside 5'-diphosphate + ATP = a 2'-deoxyribonucleoside 5'-triphosphate + ADP. It carries out the reaction a ribonucleoside 5'-diphosphate + ATP = a ribonucleoside 5'-triphosphate + ADP. Major role in the synthesis of nucleoside triphosphates other than ATP. The ATP gamma phosphate is transferred to the NDP beta phosphate via a ping-pong mechanism, using a phosphorylated active-site intermediate. This is Nucleoside diphosphate kinase from Corynebacterium diphtheriae (strain ATCC 700971 / NCTC 13129 / Biotype gravis).